The following is a 2571-amino-acid chain: Stabilin-1 (2571 aa).

The N-terminal stretch at Met-1–Gly-25 is a signal peptide. Residues Gln-26–Pro-2475 lie on the Extracellular side of the membrane. 4 EGF-like domains span residues Phe-111 to Gln-149, Phe-157 to Asp-194, Glu-196 to Leu-232, and Ala-233 to Leu-272. 12 cysteine pairs are disulfide-bonded: Cys-113–Cys-127, Cys-121–Cys-137, Cys-139–Cys-148, Cys-161–Cys-172, Cys-165–Cys-182, Cys-184–Cys-193, Cys-200–Cys-211, Cys-205–Cys-218, Cys-220–Cys-231, Cys-237–Cys-248, Cys-242–Cys-258, and Cys-260–Cys-271. N-linked (GlcNAc...) asparagine glycosylation is found at Asn-134 and Asn-142. Asn-287, Asn-313, Asn-416, Asn-607, Asn-674, Asn-713, and Asn-746 each carry an N-linked (GlcNAc...) asparagine glycan. 2 FAS1 domains span residues Tyr-357–Arg-495 and Lys-507–Leu-642. The EGF-like 5 domain occupies Asp-729–His-769. Cystine bridges form between Cys-733/Cys-747, Cys-741/Cys-757, and Cys-759/Cys-768. N-linked (GlcNAc...) asparagine glycosylation is present at Asn-817. EGF-like domains lie at Ser-819–Ser-859, Arg-862–Val-904, Ala-905–Ser-947, and Pro-948–Ser-987. Cystine bridges form between Cys-823–Cys-838, Cys-832–Cys-847, Cys-866–Cys-880, Cys-874–Cys-890, Cys-892–Cys-903, Cys-909–Cys-923, Cys-917–Cys-933, Cys-935–Cys-946, Cys-952–Cys-965, and Cys-959–Cys-975. FAS1 domains follow at residues Tyr-989 to Leu-1119 and Gly-1129 to Leu-1254. Asn-1011, Asn-1088, Asn-1097, Asn-1171, Asn-1179, Asn-1223, and Asn-1275 each carry an N-linked (GlcNAc...) asparagine glycan. The Laminin EGF-like 1 domain maps to Thr-1328 to Glu-1393. 18 disulfide bridges follow: Cys-1333–Cys-1347, Cys-1341–Cys-1357, Cys-1359–Cys-1368, Cys-1380–Cys-1391, Cys-1384–Cys-1401, Cys-1403–Cys-1412, Cys-1421–Cys-1431, Cys-1425–Cys-1441, Cys-1443–Cys-1454, Cys-1460–Cys-1473, Cys-1467–Cys-1483, Cys-1485–Cys-1496, Cys-1502–Cys-1515, Cys-1509–Cys-1525, Cys-1527–Cys-1539, Cys-1545–Cys-1558, Cys-1552–Cys-1568, and Cys-1570–Cys-1582. Residue Asn-1398 is glycosylated (N-linked (GlcNAc...) asparagine). 4 EGF-like domains span residues Thr-1417 to Ser-1455, Glu-1456 to Gln-1497, Glu-1498 to Lys-1540, and Leu-1541 to His-1583. N-linked (GlcNAc...) asparagine glycosylation is found at Asn-1450 and Asn-1472. 2 FAS1 domains span residues His-1583 to Leu-1709 and Pro-1725 to Leu-1865. 2 N-linked (GlcNAc...) asparagine glycosylation sites follow: Asn-1627 and Asn-1728. Residues Ile-1966–Glu-2031 form the Laminin EGF-like 2 domain. 17 disulfide bridges follow: Cys-1971–Cys-1985, Cys-1979–Cys-1995, Cys-1997–Cys-2006, Cys-2018–Cys-2029, Cys-2023–Cys-2039, Cys-2041–Cys-2050, Cys-2060–Cys-2070, Cys-2064–Cys-2076, Cys-2078–Cys-2089, Cys-2095–Cys-2108, Cys-2102–Cys-2117, Cys-2119–Cys-2130, Cys-2136–Cys-2150, Cys-2144–Cys-2160, Cys-2162–Cys-2173, Cys-2230–Cys-2299, and Cys-2254–Cys-2275. EGF-like domains follow at residues Leu-2056 to Thr-2090, Val-2091 to Arg-2131, and Ala-2132 to Leu-2174. Asn-2107 is a glycosylation site (N-linked (GlcNAc...) asparagine). The region spanning Gly-2208–Arg-2301 is the Link domain. N-linked (GlcNAc...) asparagine glycans are attached at residues Asn-2261, Asn-2290, Asn-2334, Asn-2347, Asn-2379, Asn-2393, Asn-2400, and Asn-2424. Residues Asn-2322–Leu-2459 form the FAS1 7 domain. The chain crosses the membrane as a helical span at residues Val-2476 to Ala-2496. The Cytoplasmic segment spans residues Leu-2497–Lys-2571.

In terms of assembly, interacts with CHID1.

The protein resides in the membrane. In terms of biological role, acts as a scavenger receptor for acetylated low density lipoprotein. Binds to both Gram-positive and Gram-negative bacteria and may play a role in defense against bacterial infection. When inhibited in endothelial tube formation assays, there is a marked decrease in cell-cell interactions, suggesting a role in angiogenesis. Involved in the delivery of newly synthesized CHID1/SI-CLP from the biosynthetic compartment to the endosomal/lysosomal system. This chain is Stabilin-1 (Stab1), found in Mus musculus (Mouse).